A 257-amino-acid chain; its full sequence is Cytochrome c oxidase subunit 3 (257 aa).

6 consecutive transmembrane segments (helical) span residues 13-33, 36-56, 80-100, 154-174, 195-215, and 237-257; these read PWPI…VSYF, LSMY…FQWW, GMIL…WAFF, YISA…FTMF, FFMT…FLLV, and AWYW…MYWW.

It belongs to the cytochrome c oxidase subunit 3 family. Component of the cytochrome c oxidase (complex IV, CIV), a multisubunit enzyme composed of a catalytic core of 3 subunits and several supernumerary subunits. The complex exists as a monomer or a dimer and forms supercomplexes (SCs) in the inner mitochondrial membrane with ubiquinol-cytochrome c oxidoreductase (cytochrome b-c1 complex, complex III, CIII).

The protein resides in the mitochondrion inner membrane. The catalysed reaction is 4 Fe(II)-[cytochrome c] + O2 + 8 H(+)(in) = 4 Fe(III)-[cytochrome c] + 2 H2O + 4 H(+)(out). Component of the cytochrome c oxidase, the last enzyme in the mitochondrial electron transport chain which drives oxidative phosphorylation. The respiratory chain contains 3 multisubunit complexes succinate dehydrogenase (complex II, CII), ubiquinol-cytochrome c oxidoreductase (cytochrome b-c1 complex, complex III, CIII) and cytochrome c oxidase (complex IV, CIV), that cooperate to transfer electrons derived from NADH and succinate to molecular oxygen, creating an electrochemical gradient over the inner membrane that drives transmembrane transport and the ATP synthase. Cytochrome c oxidase is the component of the respiratory chain that catalyzes the reduction of oxygen to water. Electrons originating from reduced cytochrome c in the intermembrane space (IMS) are transferred via the dinuclear copper A center (CU(A)) of subunit 2 and heme A of subunit 1 to the active site in subunit 1, a binuclear center (BNC) formed by heme A3 and copper B (CU(B)). The BNC reduces molecular oxygen to 2 water molecules using 4 electrons from cytochrome c in the IMS and 4 protons from the mitochondrial matrix. This chain is Cytochrome c oxidase subunit 3 (COIII), found in Rhipicephalus sanguineus (Brown dog tick).